Here is a 293-residue protein sequence, read N- to C-terminus: Probable metal transport system membrane protein TC_0698 (293 aa).

7 consecutive transmembrane segments (helical) span residues S18–V38, I41–W61, L68–G88, I101–P121, D142–T162, F186–I206, and F242–L262.

This sequence belongs to the ABC-3 integral membrane protein family.

Its subcellular location is the cell inner membrane. Its function is as follows. Part of an ATP-driven transport system TC_0696/TC_0697/TC_0698 for a metal. The chain is Probable metal transport system membrane protein TC_0698 from Chlamydia muridarum (strain MoPn / Nigg).